We begin with the raw amino-acid sequence, 114 residues long: Large ribosomal subunit protein bL19 (114 aa).

Belongs to the bacterial ribosomal protein bL19 family.

Functionally, this protein is located at the 30S-50S ribosomal subunit interface and may play a role in the structure and function of the aminoacyl-tRNA binding site. The chain is Large ribosomal subunit protein bL19 from Lactococcus lactis subsp. cremoris (strain MG1363).